Reading from the N-terminus, the 95-residue chain is Ragulator complex protein LAMTOR4 homolog (95 aa).

This sequence belongs to the LAMTOR4 family. In terms of assembly, part of the Ragulator complex.

It localises to the lysosome. In terms of biological role, regulator of the TOR pathway, a signaling cascade that promotes cell growth in response to growth factors, energy levels, and amino acids. As part of the Ragulator complex, may activate the TOR signaling cascade in response to amino acids. This is Ragulator complex protein LAMTOR4 homolog from Nematostella vectensis (Starlet sea anemone).